Reading from the N-terminus, the 760-residue chain is Cellulose synthase-like protein G1 (760 aa).

The next 2 membrane-spanning stretches (helical) occupy residues 28–48 (IYAI…VHSL) and 54–74 (TLIT…WATT). Residues D142 and D447 contribute to the active site. 5 consecutive transmembrane segments (helical) span residues 530-550 (IPLT…VSVF), 558-578 (FWLY…DFLL), 593-613 (LMIK…LKTL), 656-676 (VAIV…FCGG), and 680-700 (LELM…GAMV).

Belongs to the glycosyltransferase 2 family. Plant cellulose synthase-like G subfamily. Expressed in young seedlings, primarily in the vascular tissue.

The protein resides in the golgi apparatus membrane. Its function is as follows. Thought to be a Golgi-localized beta-glycan synthase that polymerize the backbones of noncellulosic polysaccharides (hemicelluloses) of plant cell wall. This Arabidopsis thaliana (Mouse-ear cress) protein is Cellulose synthase-like protein G1 (CSLG1).